The following is a 488-amino-acid chain: Glutamyl-tRNA(Gln) amidotransferase subunit A (488 aa).

Catalysis depends on charge relay system residues lysine 77 and serine 152. The active-site Acyl-ester intermediate is serine 176.

Belongs to the amidase family. GatA subfamily. In terms of assembly, heterotrimer of A, B and C subunits.

The enzyme catalyses L-glutamyl-tRNA(Gln) + L-glutamine + ATP + H2O = L-glutaminyl-tRNA(Gln) + L-glutamate + ADP + phosphate + H(+). Its function is as follows. Allows the formation of correctly charged Gln-tRNA(Gln) through the transamidation of misacylated Glu-tRNA(Gln) in organisms which lack glutaminyl-tRNA synthetase. The reaction takes place in the presence of glutamine and ATP through an activated gamma-phospho-Glu-tRNA(Gln). The chain is Glutamyl-tRNA(Gln) amidotransferase subunit A from Streptococcus pneumoniae (strain Hungary19A-6).